We begin with the raw amino-acid sequence, 1545 residues long: ATP-binding cassette sub-family C member 9 (1545 aa).

Residues 1 to 30 (MSLSFCGNNISSYNIYHGVLQNPCFVDALN) lie on the Extracellular side of the membrane. Asn9 is a glycosylation site (N-linked (GlcNAc...) asparagine). Residues 31-51 (LVPHVFLLFITFPILFIGWGS) form a helical membrane-spanning segment. Residues 52 to 72 (QSSKVQIHHNTWLHFPGHNLR) lie on the Cytoplasmic side of the membrane. A helical membrane pass occupies residues 73–93 (WILTFALLFVHVCEIAEGIVS). The Extracellular segment spans residues 94–101 (DSQRASRH). The helical transmembrane segment at 102-122 (LHLFMPAVMGFVATTTSIVYY) threads the bilayer. Over 123 to 132 (HNIETSNFPK) the chain is Cytoplasmic. A helical membrane pass occupies residues 133 to 153 (LLLALFLYWVMAFITKTIKLV). Residues 154 to 167 (KYWQLGWGMSDLRF) are Extracellular-facing. A helical transmembrane segment spans residues 168–188 (CITGVMVILNGLLMAVEINVI). Over 189 to 301 (RVRRYVFFMN…AFGRPILLSS (113 aa)) the chain is Cytoplasmic. The region spanning 297 to 594 (ILLSSTFRYL…LSTVVRFAVK (298 aa)) is the ABC transmembrane type-1 1 domain. A helical transmembrane segment spans residues 302–322 (TFRYLADLLGFAGPLCISGIV). At 323-347 (QRVNEPKNNTTRFSETLSSKEFLEN) the chain is on the extracellular side. Asn330 and Asn331 each carry an N-linked (GlcNAc...) asparagine glycan. The helical transmembrane segment at 348–368 (AHVLAVLLFLALILQRTFLQA) threads the bilayer. Residues 369–420 (SYYVTIETGINLRGALLAMIYNKILRLSTSNLSMGEMTLGQINNLVAIETNQ) are Cytoplasmic-facing. A helical membrane pass occupies residues 421-441 (LMWFLFLCPNLWAMPVQIIMG). Topologically, residues 442–452 (VILLYNLLGSS) are extracellular. The chain crosses the membrane as a helical span at residues 453–473 (ALVGAAVIVLLAPIQYFIATK). Over 474–528 (LAEAQKSTLDYSTERLKKTNEILKGIKLLKLYAWEHIFCKSVEETRMKELSSLKT) the chain is Cytoplasmic. A helical transmembrane segment spans residues 529–549 (FALYTSLSIFMNAAIPIAAVL). Over 550 to 568 (ATFVTHAYASGNNLKPAEA) the chain is Extracellular. The helical transmembrane segment at 569–589 (FASLSLFHILVTPLFLLSTVV) threads the bilayer. Residues 590–986 (RFAVKAIISV…TCWWYLTSGG (397 aa)) are Cytoplasmic-facing. Residues 668 to 908 (IKVTNGYFSW…DVELYEHWKT (241 aa)) enclose the ABC transporter 1 domain. 701-708 (GQVGCGKS) serves as a coordination point for ATP. The tract at residues 940-963 (REAKAQMEDEDEEEEEEEDEDDNM) is disordered. The segment covering 947–962 (EDEDEEEEEEEDEDDN) has biased composition (acidic residues). A helical membrane pass occupies residues 987–1007 (FFLLFLMIFSKLLKHSVIVAI). An ABC transmembrane type-1 2 domain is found at 990-1270 (LFLMIFSKLL…VVRNLADLEV (281 aa)). Residues 1008–1030 (DYWLATWTSEYSINDPGKADQTF) are Extracellular-facing. A helical membrane pass occupies residues 1031–1051 (YVAGFSILCGAGIFLCLVTSL). The Cytoplasmic portion of the chain corresponds to 1052-1123 (TVEWMGLTAA…TLLCLSAIGM (72 aa)). The chain crosses the membrane as a helical span at residues 1124-1144 (ISYATPVFLIALAPLGVAFYF). The Extracellular portion of the chain corresponds to 1145–1241 (IQKYFRVASK…IASISGSSNS (97 aa)). A helical transmembrane segment spans residues 1242–1262 (GLVGLGLLYALTITNYLNWVV). Over 1263-1545 (RNLADLEVQM…LFSTLVMTNK (283 aa)) the chain is Cytoplasmic. An ABC transporter 2 domain is found at 1308 to 1542 (IKIHDLCVRY…KNGLFSTLVM (235 aa)). Residue 1342 to 1349 (GRTGSGKS) participates in ATP binding.

It belongs to the ABC transporter superfamily. ABCC family. Conjugate transporter (TC 3.A.1.208) subfamily. In terms of assembly, interacts with KCNJ11. Interacts with KCNJ8. In terms of tissue distribution, expressed at high levels in heart, skeletal muscle and ovary. Moderate levels are found in brain, tongue and pancreatic islets. Low levels are found in lung, testis and adrenal gland. Expressed at very low levels in stomach, colon, thyroid and pituitary.

It localises to the membrane. Its function is as follows. Subunit of ATP-sensitive potassium channels (KATP). Can form cardiac and smooth muscle-type KATP channels with KCNJ11. KCNJ11 forms the channel pore while ABCC9 is required for activation and regulation. Can form a sulfonylurea-sensitive but ATP-insensitive potassium channel with KCNJ8. The sequence is that of ATP-binding cassette sub-family C member 9 (Abcc9) from Rattus norvegicus (Rat).